The following is a 454-amino-acid chain: Bifunctional protein GlmU (454 aa).

The pyrophosphorylase stretch occupies residues Met-1–Arg-228. UDP-N-acetyl-alpha-D-glucosamine contacts are provided by residues Leu-8 to Gly-11, Lys-22, Gln-73, and Gly-78 to Thr-79. Mg(2+) is bound at residue Asp-103. UDP-N-acetyl-alpha-D-glucosamine is bound by residues Gly-140, Glu-154, Asn-169, and Asn-226. Residue Asn-226 coordinates Mg(2+). The segment at Ala-229 to Asn-249 is linker. The segment at Gly-250–Lys-454 is N-acetyltransferase. 2 residues coordinate UDP-N-acetyl-alpha-D-glucosamine: Arg-331 and Lys-349. The active-site Proton acceptor is His-361. Tyr-364 and Asn-375 together coordinate UDP-N-acetyl-alpha-D-glucosamine. Residues Asn-384 to Tyr-385, Ala-421, and Arg-438 each bind acetyl-CoA.

It in the N-terminal section; belongs to the N-acetylglucosamine-1-phosphate uridyltransferase family. This sequence in the C-terminal section; belongs to the transferase hexapeptide repeat family. As to quaternary structure, homotrimer. Requires Mg(2+) as cofactor.

Its subcellular location is the cytoplasm. It catalyses the reaction alpha-D-glucosamine 1-phosphate + acetyl-CoA = N-acetyl-alpha-D-glucosamine 1-phosphate + CoA + H(+). The enzyme catalyses N-acetyl-alpha-D-glucosamine 1-phosphate + UTP + H(+) = UDP-N-acetyl-alpha-D-glucosamine + diphosphate. Its pathway is nucleotide-sugar biosynthesis; UDP-N-acetyl-alpha-D-glucosamine biosynthesis; N-acetyl-alpha-D-glucosamine 1-phosphate from alpha-D-glucosamine 6-phosphate (route II): step 2/2. It participates in nucleotide-sugar biosynthesis; UDP-N-acetyl-alpha-D-glucosamine biosynthesis; UDP-N-acetyl-alpha-D-glucosamine from N-acetyl-alpha-D-glucosamine 1-phosphate: step 1/1. The protein operates within bacterial outer membrane biogenesis; LPS lipid A biosynthesis. Its function is as follows. Catalyzes the last two sequential reactions in the de novo biosynthetic pathway for UDP-N-acetylglucosamine (UDP-GlcNAc). The C-terminal domain catalyzes the transfer of acetyl group from acetyl coenzyme A to glucosamine-1-phosphate (GlcN-1-P) to produce N-acetylglucosamine-1-phosphate (GlcNAc-1-P), which is converted into UDP-GlcNAc by the transfer of uridine 5-monophosphate (from uridine 5-triphosphate), a reaction catalyzed by the N-terminal domain. The polypeptide is Bifunctional protein GlmU (Clostridium perfringens (strain ATCC 13124 / DSM 756 / JCM 1290 / NCIMB 6125 / NCTC 8237 / Type A)).